The following is a 356-amino-acid chain: tRNA-specific 2-thiouridylase MnmA 1 (356 aa).

ATP is bound by residues 8–15 (GMSGGVDS) and methionine 34. The active-site Nucleophile is the cysteine 103. Cysteine 103 and cysteine 199 form a disulfide bridge. Glycine 127 contacts ATP. Residues 149–151 (KDQ) are interaction with tRNA. The active-site Cysteine persulfide intermediate is the cysteine 199. Residues 305-306 (RY) are interaction with tRNA.

Belongs to the MnmA/TRMU family.

The protein resides in the cytoplasm. It carries out the reaction S-sulfanyl-L-cysteinyl-[protein] + uridine(34) in tRNA + AH2 + ATP = 2-thiouridine(34) in tRNA + L-cysteinyl-[protein] + A + AMP + diphosphate + H(+). In terms of biological role, catalyzes the 2-thiolation of uridine at the wobble position (U34) of tRNA, leading to the formation of s(2)U34. In Clostridium botulinum (strain ATCC 19397 / Type A), this protein is tRNA-specific 2-thiouridylase MnmA 1.